A 681-amino-acid polypeptide reads, in one-letter code: Pseudohemocyanin-2 (681 aa).

An N-terminal signal peptide occupies residues 1-21 (VLLCSLVAATAAWPYFGGFQR). N-linked (GlcNAc...) asparagine glycans are attached at residues Asn98, Asn191, Asn228, and Asn624.

Belongs to the tyrosinase family. Hemocyanin subfamily. As to quaternary structure, hexamer. As to expression, strongly expressed in ovaries. Also expressed in heart. Not detected in hepatopancreas, gills, connective tissue or muscle.

Does not function as a hemocyanin. The chain is Pseudohemocyanin-2 from Homarus americanus (American lobster).